The sequence spans 208 residues: N-(5'-phosphoribosyl)anthranilate isomerase (208 aa).

The protein belongs to the TrpF family.

It catalyses the reaction N-(5-phospho-beta-D-ribosyl)anthranilate = 1-(2-carboxyphenylamino)-1-deoxy-D-ribulose 5-phosphate. It participates in amino-acid biosynthesis; L-tryptophan biosynthesis; L-tryptophan from chorismate: step 3/5. The chain is N-(5'-phosphoribosyl)anthranilate isomerase from Methanococcus maripaludis (strain C7 / ATCC BAA-1331).